Reading from the N-terminus, the 148-residue chain is UPF0251 protein Cbei_2962 (148 aa).

This sequence belongs to the UPF0251 family.

The chain is UPF0251 protein Cbei_2962 from Clostridium beijerinckii (strain ATCC 51743 / NCIMB 8052) (Clostridium acetobutylicum).